Consider the following 454-residue polypeptide: Tryptophanase (454 aa).

Lys256 is modified (N6-(pyridoxal phosphate)lysine).

Belongs to the beta-eliminating lyase family. Homotetramer. Requires pyridoxal 5'-phosphate as cofactor.

The enzyme catalyses L-tryptophan + H2O = indole + pyruvate + NH4(+). It functions in the pathway amino-acid degradation; L-tryptophan degradation via pyruvate pathway; indole and pyruvate from L-tryptophan: step 1/1. The chain is Tryptophanase from Hyphomonas neptunium (strain ATCC 15444).